Reading from the N-terminus, the 59-residue chain is Small, acid-soluble spore protein H 2 (59 aa).

Belongs to the SspH family.

Its subcellular location is the spore core. The sequence is that of Small, acid-soluble spore protein H 2 (sspH2) from Bacillus cereus (strain ATCC 14579 / DSM 31 / CCUG 7414 / JCM 2152 / NBRC 15305 / NCIMB 9373 / NCTC 2599 / NRRL B-3711).